The chain runs to 128 residues: Large ribosomal subunit protein mL51 (128 aa).

Residues M1–L31 constitute a mitochondrion transit peptide.

Belongs to the mitochondrion-specific ribosomal protein mL51 family. As to quaternary structure, component of the mitochondrial ribosome large subunit (39S) which comprises a 16S rRNA and about 50 distinct proteins. Interacts with OXA1L.

The protein resides in the mitochondrion. The sequence is that of Large ribosomal subunit protein mL51 (Mrpl51) from Mus musculus (Mouse).